The primary structure comprises 182 residues: Large ribosomal subunit protein bL17 (182 aa).

The interval 126–182 (ERANRVAASKAKKAEAEAAEAKAEEAEEAPEVEADTATDKAAEAEAAEAADEAAEDK) is disordered. Over residues 137 to 149 (KKAEAEAAEAKAE) the composition is skewed to basic and acidic residues. 2 stretches are compositionally biased toward acidic residues: residues 150–161 (EAEEAPEVEADT) and 170–182 (EAAE…AEDK).

Belongs to the bacterial ribosomal protein bL17 family. As to quaternary structure, part of the 50S ribosomal subunit. Contacts protein L32.

The polypeptide is Large ribosomal subunit protein bL17 (Corynebacterium jeikeium (strain K411)).